The primary structure comprises 236 residues: Ribonuclease 3 (236 aa).

The 123-residue stretch at 8-130 (FRRLSQALDY…TFAAVSFDAD (123 aa)) folds into the RNase III domain. E43 is a Mg(2+) binding site. D47 is an active-site residue. Mg(2+) contacts are provided by D116 and E119. The active site involves E119. The DRBM domain occupies 157 to 227 (DAKTRLQEAL…AEAALTLLEQ (71 aa)).

It belongs to the ribonuclease III family. Homodimer. It depends on Mg(2+) as a cofactor.

It is found in the cytoplasm. The catalysed reaction is Endonucleolytic cleavage to 5'-phosphomonoester.. Its function is as follows. Digests double-stranded RNA. Involved in the processing of primary rRNA transcript to yield the immediate precursors to the large and small rRNAs (23S and 16S). Processes some mRNAs, and tRNAs when they are encoded in the rRNA operon. Processes pre-crRNA and tracrRNA of type II CRISPR loci if present in the organism. The protein is Ribonuclease 3 of Chromobacterium violaceum (strain ATCC 12472 / DSM 30191 / JCM 1249 / CCUG 213 / NBRC 12614 / NCIMB 9131 / NCTC 9757 / MK).